An 89-amino-acid chain; its full sequence is MSITAERKAEVIKTNARKSGDTGSPEVQVAILSERIVNLTNHFKSHGKDNHSRRGLLKLVSTRRSLLDYVKKKDEARYRALLEKHNIRR.

A compositionally biased stretch (basic and acidic residues) spans 1–11; the sequence is MSITAERKAEV. Positions 1–25 are disordered; the sequence is MSITAERKAEVIKTNARKSGDTGSP.

It belongs to the universal ribosomal protein uS15 family. As to quaternary structure, part of the 30S ribosomal subunit. Forms a bridge to the 50S subunit in the 70S ribosome, contacting the 23S rRNA.

One of the primary rRNA binding proteins, it binds directly to 16S rRNA where it helps nucleate assembly of the platform of the 30S subunit by binding and bridging several RNA helices of the 16S rRNA. In terms of biological role, forms an intersubunit bridge (bridge B4) with the 23S rRNA of the 50S subunit in the ribosome. In Nitrobacter hamburgensis (strain DSM 10229 / NCIMB 13809 / X14), this protein is Small ribosomal subunit protein uS15.